The chain runs to 334 residues: Holliday junction branch migration complex subunit RuvB (334 aa).

The segment at 4 to 184 (ADRLVSAGVI…FGIVQRLEFY (181 aa)) is large ATPase domain (RuvB-L). ATP is bound by residues I23, R24, G65, K68, T69, T70, 131-133 (EDY), R174, Y184, and R221. A Mg(2+)-binding site is contributed by T69. Residues 185 to 255 (RVEDLQHIVG…VASRALDMLS (71 aa)) form a small ATPAse domain (RuvB-S) region. Positions 258–334 (SEGFDYMDRK…YKHFGITREG (77 aa)) are head domain (RuvB-H). Residues R294, R313, and R318 each contribute to the DNA site.

It belongs to the RuvB family. As to quaternary structure, homohexamer. Forms an RuvA(8)-RuvB(12)-Holliday junction (HJ) complex. HJ DNA is sandwiched between 2 RuvA tetramers; dsDNA enters through RuvA and exits via RuvB. An RuvB hexamer assembles on each DNA strand where it exits the tetramer. Each RuvB hexamer is contacted by two RuvA subunits (via domain III) on 2 adjacent RuvB subunits; this complex drives branch migration. In the full resolvosome a probable DNA-RuvA(4)-RuvB(12)-RuvC(2) complex forms which resolves the HJ.

The protein resides in the cytoplasm. The enzyme catalyses ATP + H2O = ADP + phosphate + H(+). The RuvA-RuvB-RuvC complex processes Holliday junction (HJ) DNA during genetic recombination and DNA repair, while the RuvA-RuvB complex plays an important role in the rescue of blocked DNA replication forks via replication fork reversal (RFR). RuvA specifically binds to HJ cruciform DNA, conferring on it an open structure. The RuvB hexamer acts as an ATP-dependent pump, pulling dsDNA into and through the RuvAB complex. RuvB forms 2 homohexamers on either side of HJ DNA bound by 1 or 2 RuvA tetramers; 4 subunits per hexamer contact DNA at a time. Coordinated motions by a converter formed by DNA-disengaged RuvB subunits stimulates ATP hydrolysis and nucleotide exchange. Immobilization of the converter enables RuvB to convert the ATP-contained energy into a lever motion, pulling 2 nucleotides of DNA out of the RuvA tetramer per ATP hydrolyzed, thus driving DNA branch migration. The RuvB motors rotate together with the DNA substrate, which together with the progressing nucleotide cycle form the mechanistic basis for DNA recombination by continuous HJ branch migration. Branch migration allows RuvC to scan DNA until it finds its consensus sequence, where it cleaves and resolves cruciform DNA. This Erwinia tasmaniensis (strain DSM 17950 / CFBP 7177 / CIP 109463 / NCPPB 4357 / Et1/99) protein is Holliday junction branch migration complex subunit RuvB.